Reading from the N-terminus, the 95-residue chain is Small ribosomal subunit protein bS18 (95 aa).

Belongs to the bacterial ribosomal protein bS18 family. Part of the 30S ribosomal subunit. Forms a tight heterodimer with protein bS6.

Functionally, binds as a heterodimer with protein bS6 to the central domain of the 16S rRNA, where it helps stabilize the platform of the 30S subunit. This is Small ribosomal subunit protein bS18 from Rickettsia massiliae (strain Mtu5).